The following is a 336-amino-acid chain: MKIAIVNDMPMAIEALRRALAFEPAHQVIWVAANGADAVQRSIEQTPDLILMDLIMPVMDGVEATRRIMAETPCAIVIVTVDREQNMRRVFEAMGHGALDVVDTPAIGGPNPREAAAPLLRKILNIDWLMGQRVGRERVVTTSRSEVSRRDRLVAIGSSAGGPAALEILLKGLPENFPAAIVLVQHVDQVFAAGMAEWLCSASGMPVRLAKEGETPQVGVVLLAGTNHHIRLLKDGTLAYTAEPVNEVYRPSIDVFFESVTRYWTGEAVGVLLTGMGRDGAQGLKAMRERGFLTIAQDQASSAVYGMPKAAAAIDAAVEIRPLHTIAPRLMEVFTQ.

One can recognise a Response regulatory domain in the interval 2 to 119 (KIAIVNDMPM…PNPREAAAPL (118 aa)). Asp53 carries the 4-aspartylphosphate modification. The CheB-type methylesterase domain occupies 147 to 336 (VSRRDRLVAI…APRLMEVFTQ (190 aa)). Catalysis depends on residues Ser159, His186, and Asp279.

This sequence belongs to the CheB family. Post-translationally, phosphorylated by CheA. Phosphorylation of the N-terminal regulatory domain activates the methylesterase activity.

Its subcellular location is the cytoplasm. The enzyme catalyses [protein]-L-glutamate 5-O-methyl ester + H2O = L-glutamyl-[protein] + methanol + H(+). The catalysed reaction is L-glutaminyl-[protein] + H2O = L-glutamyl-[protein] + NH4(+). In terms of biological role, involved in chemotaxis. Part of a chemotaxis signal transduction system that modulates chemotaxis in response to various stimuli. Catalyzes the demethylation of specific methylglutamate residues introduced into the chemoreceptors (methyl-accepting chemotaxis proteins or MCP) by CheR. Also mediates the irreversible deamidation of specific glutamine residues to glutamic acid. This Pseudomonas syringae pv. tomato (strain ATCC BAA-871 / DC3000) protein is Protein-glutamate methylesterase/protein-glutamine glutaminase 3.